Reading from the N-terminus, the 187-residue chain is Nodulin-related protein 1 (187 aa).

The residue at position 1 (Met1) is an N-acetylmethionine. Disordered stretches follow at residues 1 to 66 (MDFF…ATNA) and 132 to 176 (YETS…HGFG). A compositionally biased stretch (basic and acidic residues) spans 7–48 (QVKKKFSDKKPESSDPEPNHNKNKPGHTEPTTHKPGHGEPTT). Residues 142–158 (GGTGSHGNVGGHGGGAG) show a composition bias toward gly residues.

In terms of assembly, interacts with RPS2. In terms of tissue distribution, expressed in roots, leaves, flowers and siliques.

Its function is as follows. Prevents accumulation of abscisic acid (ABA) after heat treatment, thus reducing thermotolerance. May be a negative regulator of the ABA signaling/synthesis pathway. Required for defense responses against avirulent bacteria such as P.syringae pv. tomato DC3000 (avrRpt2). In Arabidopsis thaliana (Mouse-ear cress), this protein is Nodulin-related protein 1.